A 408-amino-acid chain; its full sequence is MADFFLMDSFDLAGRTIYLRVDINSPVNPVTGEIMGTDRFRAHVETIRKLRDSKVVIVAHQSRPGKDDFTSLRQHAQVMSRILNKKVMFVDQLFGSLVNKTVESMNEGDIVMLENARFYSEEVDLTTLESMENSNIVKGLSTLFDYYIIDAFAAIHRAQTTLVGFRRIKPNIAGALIEKEVTMIDRFRHLNESPKIAILGGAKIDDSIAVSENFLKSGFVDKILTGGVVANAFLWAKGIDIGKKNRDFIIKNNGDYEKLIAKCKGLLSEFGDRILVPSDFILSPSGERVSANGKIPDDQILADIGLDTVVEYSEIIDKAKAIFMNGPMGIYEIEAYSSGTREIFSSVAKSEAFSIAGGGHTLSALDKLGLTNRIDHASTGGGALISYLSGEAMPVLEALKESKRLFEV.

Residues 22 to 24, arginine 39, 60 to 63, arginine 117, and arginine 157 each bind substrate; these read DIN and HQSR. ATP contacts are provided by residues glutamate 332 and 358-361; that span reads GGHT.

It belongs to the phosphoglycerate kinase family. As to quaternary structure, monomer.

It localises to the cytoplasm. It carries out the reaction (2R)-3-phosphoglycerate + ATP = (2R)-3-phospho-glyceroyl phosphate + ADP. The protein operates within carbohydrate degradation; glycolysis; pyruvate from D-glyceraldehyde 3-phosphate: step 2/5. The chain is Phosphoglycerate kinase from Thermoplasma volcanium (strain ATCC 51530 / DSM 4299 / JCM 9571 / NBRC 15438 / GSS1).